A 745-amino-acid chain; its full sequence is UPF0508 protein YJR030C (745 aa).

The protein belongs to the UPF0508 family.

The polypeptide is UPF0508 protein YJR030C (Saccharomyces cerevisiae (strain ATCC 204508 / S288c) (Baker's yeast)).